The sequence spans 214 residues: uncharacterized protein (214 aa).

A chloroplast-targeting transit peptide spans 1–49; it reads MATRGAVAAAASTIWKHRRNPSLRSLSRHFNPNFNHRIIPTGFKYQVRA.

It is found in the plastid. It localises to the chloroplast. This is an uncharacterized protein from Arabidopsis thaliana (Mouse-ear cress).